Reading from the N-terminus, the 362-residue chain is Spermidine/putrescine import ATP-binding protein PotA (362 aa).

One can recognise an ABC transporter domain in the interval 6-237 (ISFKHVVKSY…PINHYVADFI (232 aa)). Residue 39-46 (GPSGCGKT) coordinates ATP.

It belongs to the ABC transporter superfamily. Spermidine/putrescine importer (TC 3.A.1.11.1) family. The complex is composed of two ATP-binding proteins (PotA), two transmembrane proteins (PotB and PotC) and a solute-binding protein (PotD).

The protein resides in the cell membrane. The catalysed reaction is ATP + H2O + polyamine-[polyamine-binding protein]Side 1 = ADP + phosphate + polyamineSide 2 + [polyamine-binding protein]Side 1.. Functionally, part of the ABC transporter complex PotABCD involved in spermidine/putrescine import. Responsible for energy coupling to the transport system. In Ligilactobacillus salivarius (strain UCC118) (Lactobacillus salivarius), this protein is Spermidine/putrescine import ATP-binding protein PotA.